A 165-amino-acid chain; its full sequence is 6,7-dimethyl-8-ribityllumazine synthase (165 aa).

5-amino-6-(D-ribitylamino)uracil is bound by residues F22, 56 to 58 (SME), and 80 to 82 (AVI). 85 to 86 (ET) serves as a coordination point for (2S)-2-hydroxy-3-oxobutyl phosphate. Catalysis depends on H88, which acts as the Proton donor. F113 contacts 5-amino-6-(D-ribitylamino)uracil. R127 contacts (2S)-2-hydroxy-3-oxobutyl phosphate.

The protein belongs to the DMRL synthase family.

It catalyses the reaction (2S)-2-hydroxy-3-oxobutyl phosphate + 5-amino-6-(D-ribitylamino)uracil = 6,7-dimethyl-8-(1-D-ribityl)lumazine + phosphate + 2 H2O + H(+). Its pathway is cofactor biosynthesis; riboflavin biosynthesis; riboflavin from 2-hydroxy-3-oxobutyl phosphate and 5-amino-6-(D-ribitylamino)uracil: step 1/2. In terms of biological role, catalyzes the formation of 6,7-dimethyl-8-ribityllumazine by condensation of 5-amino-6-(D-ribitylamino)uracil with 3,4-dihydroxy-2-butanone 4-phosphate. This is the penultimate step in the biosynthesis of riboflavin. This chain is 6,7-dimethyl-8-ribityllumazine synthase, found in Thermotoga sp. (strain RQ2).